Consider the following 155-residue polypeptide: Gas vesicle protein K (155 aa).

It belongs to the gas vesicle GvpK family.

The protein localises to the gas vesicle. Its function is as follows. Might be involved in nucleating gas vesicle formation. Gas vesicles (GV) are hollow, gas filled proteinaceous nanostructures. During planktonic growth they allow positioning of the organism at a favorable depth for light or nutrient acquisition. Cluster expression in E.coli (gvpA1-gvpA2-gvpC-gvpN-gvpJ-gvpK-gvpF-gvpG-gvpV-gvpW) allows cells to float and produces irregularly shaped gas vesicles. This chain is Gas vesicle protein K, found in Nostoc sp. (strain PCC 7120 / SAG 25.82 / UTEX 2576).